The primary structure comprises 37 residues: Large ribosomal subunit protein bL36 (37 aa).

Belongs to the bacterial ribosomal protein bL36 family.

The protein is Large ribosomal subunit protein bL36 of Nostoc sp. (strain PCC 7120 / SAG 25.82 / UTEX 2576).